Here is a 387-residue protein sequence, read N- to C-terminus: Cytochrome b (387 aa).

The chain crosses the membrane as a helical span at residues 32–52 (LGSLLGLCLVIQIASGVFLAM). Histidine 82 and histidine 96 together coordinate heme b. A run of 8 helical transmembrane segments spans residues 85-105 (GASFFFICMYLHIGKALYYGS), 116-136 (IGVVIFILTMAIAFMGYCLVY), 151-171 (LSAIPFIGNDIVPFIWGGFSV), 179-199 (FFALHFLLPFILAALVCMHLM), 225-245 (FIFKDLITVFVFLLIFSLFVF), 289-309 (LGGVIAMFGAILILLSLPYTD), 324-344 (LAFYLFVFNFILLGNLGQLHV), and 350-370 (QLGQFATAYYFAHYIIVVPVI). Residues histidine 183 and histidine 197 each coordinate heme b.

This sequence belongs to the cytochrome b family. In terms of assembly, component of the ubiquinol-cytochrome c oxidoreductase (cytochrome b-c1 complex, complex III, CIII), a multisubunit enzyme composed of 10 subunits. The complex is composed of 3 respiratory subunits cytochrome b (COB), cytochrome c1 (CYT1) and Rieske protein (RIP1), 2 core protein subunits COR1 and QCR2, and 5 low-molecular weight protein subunits QCR6, QCR7, QCR8, QCR9 and QCR10. The complex exists as an obligatory dimer and forms supercomplexes (SCs) in the inner mitochondrial membrane with a monomer or a dimer of cytochrome c oxidase (complex IV, CIV), resulting in 2 different assemblies (supercomplexes III(2)IV and III(2)IV(2)). It depends on heme b as a cofactor.

It is found in the mitochondrion inner membrane. Its function is as follows. Component of the ubiquinol-cytochrome c oxidoreductase, a multisubunit transmembrane complex that is part of the mitochondrial electron transport chain which drives oxidative phosphorylation. The complex plays an important role in the uptake of multiple carbon sources present in different host niches. This chain is Cytochrome b, found in Candida albicans (strain SC5314 / ATCC MYA-2876) (Yeast).